The chain runs to 236 residues: Homeobox protein notochord (236 aa).

Residues 138 to 197 constitute a DNA-binding region (homeobox); it reads MKRIRTVFTPEQLEKLEKEFLKQQYMVGTERVDLASTLNLTETQVKVWFQNRRIKWRKQS. Residues 209 to 236 form a disordered region; it reads GVIPADSSDHTDDSRETEEDEDDLDVEL. Positions 223–236 are enriched in acidic residues; that stretch reads RETEEDEDDLDVEL.

In terms of tissue distribution, expressed throughout the embryo during pre-gastrula stages. Localized to the dorsal lip of the blastopore (Spemann organizer) during early gastrulation, after which expression continues in tissues derived from the organizer. Expressed in the notochord during mid-gastrulation. During neurulation, expressed in the notochord, archenteron roof and the prospective floor plate. Also expressed in the region that will become the epiphysis, the pineal body precursor. By the early tailbud stages, expression is limited to posterior notochord and floor plate before becoming restricted to the tip of the tail in the tadpole.

Its subcellular location is the nucleus. In terms of biological role, transcriptional repressor. Plays a fundamental role in notochord formation, acting within the mesodermal region. In Xenopus laevis (African clawed frog), this protein is Homeobox protein notochord (noto).